The following is a 137-amino-acid chain: Putative pre-16S rRNA nuclease (137 aa).

The protein belongs to the YqgF nuclease family.

The protein resides in the cytoplasm. Functionally, could be a nuclease involved in processing of the 5'-end of pre-16S rRNA. The protein is Putative pre-16S rRNA nuclease of Bacillus cereus (strain G9842).